A 259-amino-acid polypeptide reads, in one-letter code: Adenosylcobinamide-GDP ribazoletransferase (259 aa).

The next 5 helical transmembrane spans lie at 43–63 (LAGA…LGLG), 64–84 (ASSM…TGAL), 116–136 (FGVL…ASLV), 141–161 (PINV…LMVW), and 185–205 (TLYT…APVT).

It belongs to the CobS family. Mg(2+) serves as cofactor.

It localises to the cell inner membrane. It catalyses the reaction alpha-ribazole + adenosylcob(III)inamide-GDP = adenosylcob(III)alamin + GMP + H(+). It carries out the reaction alpha-ribazole 5'-phosphate + adenosylcob(III)inamide-GDP = adenosylcob(III)alamin 5'-phosphate + GMP + H(+). The protein operates within cofactor biosynthesis; adenosylcobalamin biosynthesis; adenosylcobalamin from cob(II)yrinate a,c-diamide: step 7/7. In terms of biological role, joins adenosylcobinamide-GDP and alpha-ribazole to generate adenosylcobalamin (Ado-cobalamin). Also synthesizes adenosylcobalamin 5'-phosphate from adenosylcobinamide-GDP and alpha-ribazole 5'-phosphate. In Allorhizobium ampelinum (strain ATCC BAA-846 / DSM 112012 / S4) (Agrobacterium vitis (strain S4)), this protein is Adenosylcobinamide-GDP ribazoletransferase.